Here is a 289-residue protein sequence, read N- to C-terminus: MASSTFFSDWNQLIKPRVTSLVLATIIPGLYLASEQPPSVFLITVTLFGTFLMSSASFIFNQVIERDRDAKMKRTSNRPIPSERISIPQATLVGISMMGLSFYMLTVYVNLLTALCALTALISYVFLYTIFLKPRTTQNIVIGGVAGCVGPLIGYAAIGNSLPIQAWILFTMIFLWTPAHFWALAIFLKEDYSDANFPMLPVVKGINQTTKSIFFYTILYSLSCVSFYFLEPSMGLLYLVIVLLVCIWMGILSYRLIQNPERQAARKFFLFSIFHLFLINITIVVDHMI.

The next 9 membrane-spanning stretches (helical) occupy residues 13–33, 40–60, 85–105, 111–131, 139–159, 168–188, 212–232, 234–254, and 269–289; these read LIKP…LYLA, VFLI…SFIF, ISIP…FYML, LLTA…YTIF, NIVI…AAIG, ILFT…AIFL, SIFF…FLEP, MGLL…ILSY, and FLFS…DHMI.

It belongs to the UbiA prenyltransferase family. Protoheme IX farnesyltransferase subfamily.

It is found in the cell inner membrane. The enzyme catalyses heme b + (2E,6E)-farnesyl diphosphate + H2O = Fe(II)-heme o + diphosphate. It functions in the pathway porphyrin-containing compound metabolism; heme O biosynthesis; heme O from protoheme: step 1/1. In terms of biological role, converts heme B (protoheme IX) to heme O by substitution of the vinyl group on carbon 2 of heme B porphyrin ring with a hydroxyethyl farnesyl side group. This chain is Protoheme IX farnesyltransferase, found in Leptospira borgpetersenii serovar Hardjo-bovis (strain JB197).